Consider the following 139-residue polypeptide: Ribonuclease P protein component (139 aa).

This sequence belongs to the RnpA family. Consists of a catalytic RNA component (M1 or rnpB) and a protein subunit.

The enzyme catalyses Endonucleolytic cleavage of RNA, removing 5'-extranucleotides from tRNA precursor.. In terms of biological role, RNaseP catalyzes the removal of the 5'-leader sequence from pre-tRNA to produce the mature 5'-terminus. It can also cleave other RNA substrates such as 4.5S RNA. The protein component plays an auxiliary but essential role in vivo by binding to the 5'-leader sequence and broadening the substrate specificity of the ribozyme. The chain is Ribonuclease P protein component from Chlamydia felis (strain Fe/C-56) (Chlamydophila felis).